Reading from the N-terminus, the 117-residue chain is Photosystem II reaction center Psb28 protein (117 aa).

This sequence belongs to the Psb28 family. Part of the photosystem II complex.

It localises to the cellular thylakoid membrane. This chain is Photosystem II reaction center Psb28 protein, found in Prochlorococcus marinus (strain MIT 9215).